The following is a 318-amino-acid chain: Ornithine carbamoyltransferase (318 aa).

Carbamoyl phosphate-binding positions include 63–66 (STRT), Gln-90, Arg-114, and 141–144 (HPCQ). L-ornithine contacts are provided by residues Asn-172, Asp-235, and 239-240 (SM). Carbamoyl phosphate-binding positions include 275 to 276 (CL) and Arg-303.

This sequence belongs to the aspartate/ornithine carbamoyltransferase superfamily. OTCase family.

It localises to the cytoplasm. The catalysed reaction is carbamoyl phosphate + L-ornithine = L-citrulline + phosphate + H(+). It functions in the pathway amino-acid biosynthesis; L-arginine biosynthesis; L-arginine from L-ornithine and carbamoyl phosphate: step 1/3. Its function is as follows. Reversibly catalyzes the transfer of the carbamoyl group from carbamoyl phosphate (CP) to the N(epsilon) atom of ornithine (ORN) to produce L-citrulline. The polypeptide is Ornithine carbamoyltransferase (Prochlorococcus marinus (strain MIT 9313)).